Reading from the N-terminus, the 364-residue chain is tRNA/tmRNA (uracil-C(5))-methyltransferase (364 aa).

Residues Gln188, Tyr216, Asn221, Glu237, and Asp297 each contribute to the S-adenosyl-L-methionine site. Cys322 (nucleophile) is an active-site residue. Glu356 serves as the catalytic Proton acceptor.

This sequence belongs to the class I-like SAM-binding methyltransferase superfamily. RNA M5U methyltransferase family. TrmA subfamily.

The enzyme catalyses uridine(54) in tRNA + S-adenosyl-L-methionine = 5-methyluridine(54) in tRNA + S-adenosyl-L-homocysteine + H(+). The catalysed reaction is uridine(341) in tmRNA + S-adenosyl-L-methionine = 5-methyluridine(341) in tmRNA + S-adenosyl-L-homocysteine + H(+). Its function is as follows. Dual-specificity methyltransferase that catalyzes the formation of 5-methyluridine at position 54 (m5U54) in all tRNAs, and that of position 341 (m5U341) in tmRNA (transfer-mRNA). This chain is tRNA/tmRNA (uracil-C(5))-methyltransferase, found in Mannheimia succiniciproducens (strain KCTC 0769BP / MBEL55E).